The sequence spans 207 residues: LexA repressor (207 aa).

The segment at residues 28–48 (VREIGEAVGLASSSTVHGHLS) is a DNA-binding region (H-T-H motif). Catalysis depends on for autocatalytic cleavage activity residues Ser130 and Lys168.

This sequence belongs to the peptidase S24 family. Homodimer.

The catalysed reaction is Hydrolysis of Ala-|-Gly bond in repressor LexA.. Represses a number of genes involved in the response to DNA damage (SOS response), including recA and lexA. In the presence of single-stranded DNA, RecA interacts with LexA causing an autocatalytic cleavage which disrupts the DNA-binding part of LexA, leading to derepression of the SOS regulon and eventually DNA repair. In Staphylococcus haemolyticus (strain JCSC1435), this protein is LexA repressor.